The following is a 234-amino-acid chain: bZIP transcription factor 27 (234 aa).

A Nuclear localization signal motif is present at residues 152 to 159 (KKRGQDSD). Residues 163–213 (GDRRYKRMIKNRESAARSRARKQAYTNELELEIAHLQTENARLKIQQEQLK) enclose the bZIP domain. Positions 165–184 (RRYKRMIKNRESAARSRARK) are basic motif. The interval 191–212 (LELEIAHLQTENARLKIQQEQL) is leucine-zipper. Residue threonine 231 is modified to Phosphothreonine.

Belongs to the bZIP family. As to quaternary structure, self-interacts. Interacts with FT and FD/BZIP14. Interacts with CPK33. Post-translationally, phosphorylated. As to expression, expressed on the flanks of the shoot apex.

It localises to the nucleus. In terms of biological role, transcription factor required for the transition to flowering promoted by FT. The chain is bZIP transcription factor 27 from Arabidopsis thaliana (Mouse-ear cress).